Consider the following 102-residue polypeptide: NADH-quinone oxidoreductase subunit K (102 aa).

The next 3 membrane-spanning stretches (helical) occupy residues 6 to 26, 30 to 50, and 62 to 82; these read LEHG…GLMV, ILFV…AFVV, and VMFI…LAIL.

This sequence belongs to the complex I subunit 4L family. As to quaternary structure, NDH-1 is composed of 13 different subunits. Subunits NuoA, H, J, K, L, M, N constitute the membrane sector of the complex.

It is found in the cell inner membrane. It catalyses the reaction a quinone + NADH + 5 H(+)(in) = a quinol + NAD(+) + 4 H(+)(out). NDH-1 shuttles electrons from NADH, via FMN and iron-sulfur (Fe-S) centers, to quinones in the respiratory chain. The immediate electron acceptor for the enzyme in this species is believed to be ubiquinone. Couples the redox reaction to proton translocation (for every two electrons transferred, four hydrogen ions are translocated across the cytoplasmic membrane), and thus conserves the redox energy in a proton gradient. The chain is NADH-quinone oxidoreductase subunit K from Pseudomonas putida (strain ATCC 700007 / DSM 6899 / JCM 31910 / BCRC 17059 / LMG 24140 / F1).